Consider the following 405-residue polypeptide: Diaminopimelate decarboxylase (405 aa).

Lysine 46 bears the N6-(pyridoxal phosphate)lysine mark. Residues glycine 225 and 259 to 262 contribute to the pyridoxal 5'-phosphate site; that span reads EPGR. 3 residues coordinate substrate: arginine 262, arginine 298, and tyrosine 302. Cysteine 329 (proton donor) is an active-site residue. Glutamate 330 and tyrosine 358 together coordinate substrate. Tyrosine 358 lines the pyridoxal 5'-phosphate pocket.

This sequence belongs to the Orn/Lys/Arg decarboxylase class-II family. LysA subfamily. As to quaternary structure, homodimer. Pyridoxal 5'-phosphate serves as cofactor.

It carries out the reaction meso-2,6-diaminopimelate + H(+) = L-lysine + CO2. It functions in the pathway amino-acid biosynthesis; L-lysine biosynthesis via DAP pathway; L-lysine from DL-2,6-diaminopimelate: step 1/1. Its function is as follows. Specifically catalyzes the decarboxylation of meso-diaminopimelate (meso-DAP) to L-lysine. In Helicobacter pylori (strain ATCC 700392 / 26695) (Campylobacter pylori), this protein is Diaminopimelate decarboxylase.